The following is a 436-amino-acid chain: UDP-N-acetylglucosamine 1-carboxyvinyltransferase (436 aa).

22–23 (KN) is a phosphoenolpyruvate binding site. Residue Arg96 coordinates UDP-N-acetyl-alpha-D-glucosamine. Catalysis depends on Cys120, which acts as the Proton donor. A 2-(S-cysteinyl)pyruvic acid O-phosphothioketal modification is found at Cys120. UDP-N-acetyl-alpha-D-glucosamine-binding positions include 125-129 (RPIDL), Asp309, and Ile331.

It belongs to the EPSP synthase family. MurA subfamily.

The protein localises to the cytoplasm. The catalysed reaction is phosphoenolpyruvate + UDP-N-acetyl-alpha-D-glucosamine = UDP-N-acetyl-3-O-(1-carboxyvinyl)-alpha-D-glucosamine + phosphate. It functions in the pathway cell wall biogenesis; peptidoglycan biosynthesis. Functionally, cell wall formation. Adds enolpyruvyl to UDP-N-acetylglucosamine. This Acidobacterium capsulatum (strain ATCC 51196 / DSM 11244 / BCRC 80197 / JCM 7670 / NBRC 15755 / NCIMB 13165 / 161) protein is UDP-N-acetylglucosamine 1-carboxyvinyltransferase.